Here is a 279-residue protein sequence, read N- to C-terminus: DegV domain-containing protein SAR1438 (279 aa).

A DegV domain is found at 4 to 278 (QIIVTDSTSD…QGAIGLVVLK (275 aa)). 2 residues coordinate hexadecanoate: T61 and S93.

Functionally, may bind long-chain fatty acids, such as palmitate, and may play a role in lipid transport or fatty acid metabolism. This chain is DegV domain-containing protein SAR1438, found in Staphylococcus aureus (strain MRSA252).